Consider the following 114-residue polypeptide: Class I hydrophobin 6 (114 aa).

Residues 1–19 form the signal peptide; the sequence is MLFKQLILVATALTTLAVA. Cystine bridges form between Cys33/Cys93, Cys40/Cys87, Cys41/Cys74, and Cys94/Cys107. Asn42 is a glycosylation site (N-linked (GlcNAc...) asparagine).

This sequence belongs to the fungal hydrophobin family. As to quaternary structure, self-assembles to form functional amyloid fibrils called rodlets. Self-assembly into fibrillar rodlets occurs spontaneously at hydrophobic:hydrophilic interfaces and the rodlets further associate laterally to form amphipathic monolayers.

The protein localises to the secreted. Its subcellular location is the cell wall. In terms of biological role, aerial growth, conidiation, and dispersal of filamentous fungi in the environment rely upon a capability of their secreting small amphipathic proteins called hydrophobins (HPBs) with low sequence identity. Class I can self-assemble into an outermost layer of rodlet bundles on aerial cell surfaces, conferring cellular hydrophobicity that supports fungal growth, development and dispersal; whereas Class II form highly ordered films at water-air interfaces through intermolecular interactions but contribute nothing to the rodlet structure. The protein is Class I hydrophobin 6 of Pleurotus ostreatus (strain PC15) (Oyster mushroom).